The chain runs to 220 residues: Large ribosomal subunit protein eL15 (220 aa).

Positions 197–207 are enriched in basic and acidic residues; sequence KKRHEASRGAR. The disordered stretch occupies residues 197-220; the sequence is KKRHEASRGARDPWQIAEKLKEEK.

The protein belongs to the eukaryotic ribosomal protein eL15 family.

This Desulfurococcus amylolyticus (strain DSM 18924 / JCM 16383 / VKM B-2413 / 1221n) (Desulfurococcus kamchatkensis) protein is Large ribosomal subunit protein eL15.